We begin with the raw amino-acid sequence, 88 residues long: Translation initiation factor IF-1 3 (88 aa).

Positions 1 to 72 constitute an S1-like domain; it reads MAKEELLELD…TKGCINFRHK (72 aa).

The protein belongs to the IF-1 family. In terms of assembly, component of the 30S ribosomal translation pre-initiation complex which assembles on the 30S ribosome in the order IF-2 and IF-3, IF-1 and N-formylmethionyl-tRNA(fMet); mRNA recruitment can occur at any time during PIC assembly.

It is found in the cytoplasm. One of the essential components for the initiation of protein synthesis. Stabilizes the binding of IF-2 and IF-3 on the 30S subunit to which N-formylmethionyl-tRNA(fMet) subsequently binds. Helps modulate mRNA selection, yielding the 30S pre-initiation complex (PIC). Upon addition of the 50S ribosomal subunit IF-1, IF-2 and IF-3 are released leaving the mature 70S translation initiation complex. In Burkholderia orbicola (strain AU 1054), this protein is Translation initiation factor IF-1 3.